Reading from the N-terminus, the 532-residue chain is Cilia- and flagella-associated protein 97 (532 aa).

At Ser19 the chain carries Phosphoserine. 5 disordered regions span residues 28 to 83, 116 to 263, 306 to 333, 398 to 421, and 485 to 532; these read ETNS…PVEN, IPNR…TPDI, KAAK…SLDH, LSRQ…PPKL, and GQYS…TAWL. Residues 35–49 are compositionally biased toward basic and acidic residues; sequence KQNDDPKERIDKDTK. The span at 50–63 shows a compositional bias: polar residues; it reads NVNSNTGMQTTENY. Basic and acidic residues predominate over residues 67 to 82; that stretch reads KGNERNVKFPPEHPVE. Residues 127-139 show a composition bias toward acidic residues; the sequence is GEDDYYTDGEESS. Thr133 is subject to Phosphothreonine. Residues Ser138 and Ser139 each carry the phosphoserine modification. 2 stretches are compositionally biased toward low complexity: residues 170-185 and 194-205; these read SSSS…SGSG and DSHLSDSSPSSK. Position 218 is a phosphoserine (Ser218). Polar residues predominate over residues 227-239; that stretch reads IKSTETQPSSTTP. Ser248 carries the phosphoserine modification. Over residues 253–263 the composition is skewed to polar residues; that stretch reads TDVSPLSTPDI. The segment covering 320 to 329 has biased composition (low complexity); the sequence is SSKSSSVLDS. A Phosphoserine modification is found at Ser330. Residues 374–450 are a coiled coil; the sequence is GKNYSFTREE…ALLKRLEAVK (77 aa). Over residues 493–503 the composition is skewed to polar residues; it reads SRTSSATSGLS.

The protein belongs to the CFAP97 family.

The sequence is that of Cilia- and flagella-associated protein 97 from Homo sapiens (Human).